A 334-amino-acid chain; its full sequence is Beta-hexosaminidase (334 aa).

Substrate is bound by residues Asp-62, Arg-70, Arg-131, and 161–162 (KH). His-174 serves as the catalytic Proton donor/acceptor. Asp-246 acts as the Nucleophile in catalysis.

This sequence belongs to the glycosyl hydrolase 3 family. NagZ subfamily.

The protein resides in the cytoplasm. The enzyme catalyses Hydrolysis of terminal non-reducing N-acetyl-D-hexosamine residues in N-acetyl-beta-D-hexosaminides.. The protein operates within cell wall biogenesis; peptidoglycan recycling. Its function is as follows. Plays a role in peptidoglycan recycling by cleaving the terminal beta-1,4-linked N-acetylglucosamine (GlcNAc) from peptide-linked peptidoglycan fragments, giving rise to free GlcNAc, anhydro-N-acetylmuramic acid and anhydro-N-acetylmuramic acid-linked peptides. This is Beta-hexosaminidase from Tolumonas auensis (strain DSM 9187 / NBRC 110442 / TA 4).